The sequence spans 87 residues: Putative regulatory protein GWCH70_1057 (87 aa).

The protein belongs to the RemA family.

In Geobacillus sp. (strain WCH70), this protein is Putative regulatory protein GWCH70_1057.